Consider the following 388-residue polypeptide: Putative O-antigen polymerase (388 aa).

A run of 9 helical transmembrane segments spans residues Ile23–Ile43, Leu57–Val77, Val97–Ser117, Asn143–Lys163, Ile180–Ile200, Val215–Leu235, Ile312–Trp332, Tyr338–His358, and Phe361–Phe381.

Its subcellular location is the cell inner membrane. Functionally, may function in vitro as a polymerase that catalyzes the polymerization of the O-antigen repeat units on the periplasmic face of the inner membrane, leading to the formation of the lipid-linked O-antigen molecule. However, E.coli K12 strains do not normally produce the O-antigen in vivo due to mutations in the rfb gene cluster. K12 strains are phenotypically rough, their lipopolysaccharide having a complete core structure, but no O-antigen. This chain is Putative O-antigen polymerase, found in Escherichia coli (strain K12).